A 230-amino-acid chain; its full sequence is Probable carboxylesterase Culp2 (230 aa).

A signal peptide (tat-type signal) is located at residues 1–32 (MNDLLTRRLLTMGAAAAMLAAVLLLTPITVPA). A disulfide bridge links cysteine 45 with cysteine 112. The Nucleophile role is filled by serine 123. A disulfide bridge links cysteine 185 with cysteine 192. The active site involves aspartate 189. Residue histidine 207 is the Proton donor/acceptor of the active site.

This sequence belongs to the cutinase family. Post-translationally, predicted to be exported by the Tat system. The position of the signal peptide cleavage has not been experimentally proven.

The protein resides in the secreted. Its subcellular location is the cell surface. This is Probable carboxylesterase Culp2 (cut2) from Mycobacterium bovis (strain ATCC BAA-935 / AF2122/97).